The primary structure comprises 1827 residues: Chromodomain-helicase-DNA-binding protein 2 (1827 aa).

Positions 1–14 (MMRNKDKSQEEDSS) are enriched in basic and acidic residues. Positions 1 to 264 (MMRNKDKSQE…EQQDNSETIE (264 aa)) are disordered. A compositionally biased stretch (low complexity) spans 15–75 (LHSNASSRSA…SESESAGSKS (61 aa)). 3 stretches are compositionally biased toward basic and acidic residues: residues 81 to 101 (EAKE…KMWE), 115 to 128 (SRQE…KEEA), and 146 to 155 (KKQEKWKQDP). A compositionally biased stretch (basic residues) spans 175 to 204 (GKARRPVPRRTVPKPQVKKQPKIQRGKRKK). Phosphoserine occurs at positions 207 and 208. Acidic residues predominate over residues 234–258 (EDDDFETDSDDLIEMTGEGGDEQQD). Thr-240 carries the phosphothreonine modification. At Ser-242 the chain carries Phosphoserine. 2 consecutive Chromo domains span residues 261–353 (ETIE…QWLG) and 378–456 (QIVE…IPTR). One can recognise a Helicase ATP-binding domain in the interval 496 to 666 (AHSWCKSNSV…WSLLHFIMPE (171 aa)). 509–516 (DEMGLGKT) contributes to the ATP binding site. Positions 617–620 (DEAH) match the DEAH box motif. The Helicase C-terminal domain maps to 795–946 (LLDKLLTRLR…HLVIQRMDTT (152 aa)). Disordered stretches follow at residues 1030-1124 (EDEE…RSVR), 1329-1465 (GTVA…DDLD), 1556-1638 (HKKR…ADRG), and 1679-1827 (HMDA…VRKT). Residues 1037 to 1065 (ERPHKDWDEIIPEEQRKKVEEEERQKELE) show a composition bias toward basic and acidic residues. Ser-1085, Ser-1087, Ser-1365, and Ser-1386 each carry phosphoserine. The span at 1347–1371 (KKENKAPRLKDEHGLEPASPRHSDN) shows a compositional bias: basic and acidic residues. 2 stretches are compositionally biased toward basic and acidic residues: residues 1396-1431 (ENKE…KGGD) and 1565-1574 (EQKKKDDSLG). Positions 1464–1566 (LDQETFSICK…KKRSQEEEEQ (103 aa)) are CHD1 helical C-terminal domain (CHCT). The segment covering 1584 to 1601 (SGSSRDSLISQSHTSHNL) has biased composition (polar residues). 4 stretches are compositionally biased toward basic and acidic residues: residues 1697–1719 (RPYE…DRHH), 1738–1748 (QDFRRMSDHRP), 1759–1771 (DHYR…KLGE), and 1794–1813 (SPHD…RSLE). Ser-1806 carries the post-translational modification Phosphoserine.

As to quaternary structure, interacts with MYOD1. Interacts with histone H3.3. As to expression, widely expressed.

It localises to the nucleus. The catalysed reaction is ATP + H2O = ADP + phosphate + H(+). Its function is as follows. ATP-dependent chromatin-remodeling factor that specifically binds to the promoter of target genes, leading to chromatin remodeling, possibly by promoting deposition of histone H3.3. Involved in myogenesis via interaction with MYOD1: binds to myogenic gene regulatory sequences and mediates incorporation of histone H3.3 prior to the onset of myogenic gene expression, promoting their expression. In Mus musculus (Mouse), this protein is Chromodomain-helicase-DNA-binding protein 2 (Chd2).